The chain runs to 326 residues: Siroheme decarboxylase NirDL subunit (326 aa).

Belongs to the Ahb/Nir family. In terms of assembly, forms a complex composed of NirDL, NirG and NirH. All proteins are required for the total conversion of siroheme to didecarboxysiroheme.

The enzyme catalyses siroheme + 2 H(+) = 12,18-didecarboxysiroheme + 2 CO2. It functions in the pathway porphyrin-containing compound metabolism. Involved in heme d1 biosynthesis. Catalyzes the decarboxylation of siroheme into didecarboxysiroheme. Siroheme is probably decarboxylated to monodecarboxysiroheme, which is in turn decarboxylated to didecarboxysiroheme. The polypeptide is Siroheme decarboxylase NirDL subunit (Paracoccus pantotrophus (Thiosphaera pantotropha)).